A 739-amino-acid polypeptide reads, in one-letter code: Copalyl diphosphate synthase 1 (739 aa).

Residue Lys-154 participates in substrate binding. Mg(2+) contacts are provided by Asp-287 and Asp-289. The DXDD motif signature appears at 287–290; the sequence is DADD. A substrate-binding site is contributed by Lys-373.

The protein belongs to the terpene synthase family. The cofactor is Mg(2+).

The enzyme catalyses (2E,6E,10E)-geranylgeranyl diphosphate = (+)-copalyl diphosphate. Its pathway is secondary metabolite biosynthesis; terpenoid biosynthesis. Functionally, monofunctional diterpene synthase converting geranylgeranyl diphosphate to copalyl diphosphate. In Selaginella moellendorffii (Spikemoss), this protein is Copalyl diphosphate synthase 1 (CPS1).